A 33-amino-acid polypeptide reads, in one-letter code: uncharacterized protein (33 aa).

Residues 11 to 31 traverse the membrane as a helical segment; it reads LALVIYMSVVLLLMVGVPLLF.

It localises to the membrane. This is an uncharacterized protein from Saccharomyces cerevisiae (strain ATCC 204508 / S288c) (Baker's yeast).